Reading from the N-terminus, the 340-residue chain is Ras association domain-containing protein 1 (340 aa).

Ser2 is subject to N-acetylserine. Ser2 bears the Phosphoserine mark. The interval Ser2 to Arg115 is mediates interaction with E4F1. Residues Gly51–Cys101 form a Phorbol-ester/DAG-type zinc finger. The span at Ser175 to Leu185 shows a compositional bias: low complexity. The interval Ser175 to Thr196 is disordered. The Ras-associating domain maps to Arg194–Ser288. One can recognise an SARAH domain in the interval Glu290–Cys337. Residues Glu311 to Glu314 form an MOAP1-binding region.

Interacts with MAP1S and XPA. Binds to the N-terminal of CDC20 during prometaphase. Binds to STK3/MST2 and STK4/MST1. Recruited to the TNFRSF1A and TNFRSF10A complexes in response to their respective cognate ligand, after internalization. Can self-associate. Part of a complex with MDM2, DAXX, RASSF1 and USP7. In terms of assembly, interacts with MOAP1 and E4F1. Interacts with RSSF5 and probably associates with HRAS via a RSSF1 isoform A-RSSF5 heterodimer. Interacts (via C-terminus) with DAXX (via N-terminus); the interaction is independent of MDM2 and TP53. Interacts (via N-terminus) with MDM2 (via C-terminus); the interaction is independent of TP53. Interacts with RAB39A. Interacts with RAB39B; the interaction is weak. As to quaternary structure, interacts with ECM2. Interacts with RAB39B; the interaction is strong. Does not interact with RAB39A.

The protein resides in the cytoplasm. It localises to the cytoskeleton. The protein localises to the microtubule organizing center. It is found in the centrosome. Its subcellular location is the spindle. The protein resides in the spindle pole. It localises to the nucleus. Its function is as follows. Potential tumor suppressor. Required for death receptor-dependent apoptosis. Mediates activation of Mediates activation of STK3/MST2 and STK4/MST1 during Fas-induced apoptosis by preventing their dephosphorylation. When associated with MOAP1, promotes BAX conformational change and translocation to mitochondrial membranes in response to TNF and TNFSF10 stimulation. Isoform A interacts with CDC20, an activator of the anaphase-promoting complex, APC, resulting in the inhibition of APC activity and mitotic progression. Inhibits proliferation by negatively regulating cell cycle progression at the level of G1/S-phase transition by regulating accumulation of cyclin D1 protein. Isoform C has been shown not to perform these roles, no function has been identified for this isoform. Isoform A disrupts interactions among MDM2, DAXX and USP7, thus contributing to the efficient activation of TP53 by promoting MDM2 self-ubiquitination in cell-cycle checkpoint control in response to DNA damage. The protein is Ras association domain-containing protein 1 of Mus musculus (Mouse).